Consider the following 703-residue polypeptide: Zinc finger CCCH domain-containing protein 36 (703 aa).

4 disordered regions span residues 1–42 (MAGG…DPNG), 112–176 (LQLH…MKNK), 204–242 (VSGS…AGSS), and 442–481 (HGTL…SSSQ). Positions 9-25 (GLPAAGEAAKAGRVGVG) are enriched in low complexity. Basic and acidic residues predominate over residues 112–125 (LQLHGDEKYQKKAG). Polar residues predominate over residues 149–169 (VSQSPPDSNALSSQRFGSSSP). Residues 176 to 203 (KTRKRTCTFYAQGRCKNGKSCTFLHEGE) form a C3H1-type zinc finger. Basic and acidic residues predominate over residues 451–468 (TPDKDASHHKGADFDKGG). Residues 470–481 (SRSTLHVSSSSQ) are compositionally biased toward low complexity.

The chain is Zinc finger CCCH domain-containing protein 36 from Oryza sativa subsp. japonica (Rice).